The primary structure comprises 1227 residues: Pre-mRNA-splicing factor ATP-dependent RNA helicase PRP16 (1227 aa).

Residue Gly-2 is modified to N-acetylglycine. Ser-56 bears the Phosphoserine mark. Over residues 60–89 the composition is skewed to basic and acidic residues; the sequence is REREEKDDGEDKKKSKVSSYKDWEESKDDQ. The disordered stretch occupies residues 60–320; the sequence is REREEKDDGE…ERQQWEDDQR (261 aa). Position 117 is a phosphothreonine (Thr-117). Residues 128-201 show a composition bias toward basic and acidic residues; that stretch reads FWERSRQRER…SRRNEPESPR (74 aa). A phosphoserine mark is found at Ser-199 and Ser-224. Positions 222 to 239 are enriched in polar residues; it reads YGSSRRSQWESPSPTPSY. Positions 240–263 are enriched in basic and acidic residues; the sequence is RDSERSHRLSTRDRDRSVRGKYSD. N6-acetyllysine is present on Lys-260. A compositionally biased stretch (acidic residues) spans 300-310; it reads GEEGISFDTEE. A compositionally biased stretch (basic and acidic residues) spans 311–320; that stretch reads ERQQWEDDQR. Residues Lys-482, Lys-483, and Lys-504 each participate in a glycyl lysine isopeptide (Lys-Gly) (interchain with G-Cter in SUMO2) cross-link. Positions 542–705 constitute a Helicase ATP-binding domain; it reads LTIIRDNSIV…FGNVPIFHIP (164 aa). Position 555–562 (555–562) interacts with ATP; it reads GETGSGKT. The DEAH box signature appears at 652 to 655; sequence DEAH. Positions 727–902 constitute a Helicase C-terminal domain; the sequence is AVKQSLQVHL…NVVLLLKSLG (176 aa). A disordered region spans residues 1155–1227; it reads GKSRQENRRR…PRRTPARFGL (73 aa). Basic and acidic residues-rich tracts occupy residues 1157–1169 and 1181–1194; these read SRQE…KEEA and EQLR…EKRS. Lys-1166 is covalently cross-linked (Glycyl lysine isopeptide (Lys-Gly) (interchain with G-Cter in SUMO2)). Ser-1194 bears the Phosphoserine mark.

This sequence belongs to the DEAD box helicase family. DEAH subfamily. PRP16 sub-subfamily. As to quaternary structure, identified in the spliceosome C complex.

The protein resides in the nucleus. It catalyses the reaction ATP + H2O = ADP + phosphate + H(+). Its function is as follows. Probable ATP-binding RNA helicase. Involved in pre-mRNA splicing as component of the spliceosome. The polypeptide is Pre-mRNA-splicing factor ATP-dependent RNA helicase PRP16 (DHX38) (Homo sapiens (Human)).